Here is an 85-residue protein sequence, read N- to C-terminus: Small ribosomal subunit protein uS17 (85 aa).

It belongs to the universal ribosomal protein uS17 family. As to quaternary structure, part of the 30S ribosomal subunit.

In terms of biological role, one of the primary rRNA binding proteins, it binds specifically to the 5'-end of 16S ribosomal RNA. This chain is Small ribosomal subunit protein uS17, found in Acetivibrio thermocellus (strain ATCC 27405 / DSM 1237 / JCM 9322 / NBRC 103400 / NCIMB 10682 / NRRL B-4536 / VPI 7372) (Clostridium thermocellum).